A 147-amino-acid polypeptide reads, in one-letter code: Small ribosomal subunit protein uS12 (147 aa).

It belongs to the universal ribosomal protein uS12 family. As to quaternary structure, part of the 30S ribosomal subunit.

In terms of biological role, with S4 and S5 plays an important role in translational accuracy. Located at the interface of the 30S and 50S subunits. The sequence is that of Small ribosomal subunit protein uS12 from Pyrococcus abyssi (strain GE5 / Orsay).